Consider the following 327-residue polypeptide: Beta-1,4-galactosyltransferase 7 (327 aa).

Topologically, residues 1–30 are cytoplasmic; that stretch reads MFPSRRKAAQLPWEDGRSGLLSGGLPRKCS. A helical; Signal-anchor for type II membrane protein transmembrane segment spans residues 31–51; it reads VFHLFVACLSLGFFSLLWLQL. The Lumenal segment spans residues 52–327; the sequence is SCSGDVARAV…KTATPWCTFS (276 aa). The segment at 63–87 is disordered; that stretch reads GQGQETSGPPRACPPEPPPEHWEED. UDP-alpha-D-galactose contacts are provided by residues 100–104 and 139–141; these read PFRER and FNR. Residue Asn154 is glycosylated (N-linked (GlcNAc...) asparagine). UDP-alpha-D-galactose is bound by residues 164–165, Tyr194, and Trp224; that span reads VD. Asp165 is a binding site for Mn(2+). 226–229 serves as a coordination point for N-acetyl-D-glucosamine; the sequence is REDD. Mn(2+) is bound at residue His257. UDP-alpha-D-galactose contacts are provided by residues 257-259 and Arg266; that span reads HLH. Cys316 and Cys324 are disulfide-bonded.

This sequence belongs to the glycosyltransferase 7 family. It depends on Mn(2+) as a cofactor. As to expression, high expression in heart, pancreas and liver, medium in placenta and kidney, low in brain, skeletal muscle and lung.

Its subcellular location is the golgi apparatus. It localises to the golgi stack membrane. It carries out the reaction 3-O-(beta-D-xylosyl)-L-seryl-[protein] + UDP-alpha-D-galactose = 3-O-(beta-D-galactosyl-(1-&gt;4)-beta-D-xylosyl)-L-seryl-[protein] + UDP + H(+). The protein operates within protein modification; protein glycosylation. Required for the biosynthesis of the tetrasaccharide linkage region of proteoglycans, especially for small proteoglycans in skin fibroblasts. In Homo sapiens (Human), this protein is Beta-1,4-galactosyltransferase 7 (B4GALT7).